The primary structure comprises 1270 residues: DNA-directed RNA polymerase subunit beta (1270 aa).

Belongs to the RNA polymerase beta chain family. The RNAP catalytic core consists of 2 alpha, 1 beta, 1 beta' and 1 omega subunit. When a sigma factor is associated with the core the holoenzyme is formed, which can initiate transcription.

It carries out the reaction RNA(n) + a ribonucleoside 5'-triphosphate = RNA(n+1) + diphosphate. Its function is as follows. DNA-dependent RNA polymerase catalyzes the transcription of DNA into RNA using the four ribonucleoside triphosphates as substrates. The protein is DNA-directed RNA polymerase subunit beta of Bacteroides fragilis (strain ATCC 25285 / DSM 2151 / CCUG 4856 / JCM 11019 / LMG 10263 / NCTC 9343 / Onslow / VPI 2553 / EN-2).